Reading from the N-terminus, the 231-residue chain is MASQWQGMRTSVRRRSLLKEEQLEKKEVTRSAGGHPETGPLGSLCRQFQRRLPLRAVSLNLGNGPSWKRLESPEPEQQGLQAAARSAKSALGAMSQRIQESCQSGTKWLMETQVKVRRKRGAQKDRGSPPPSLSQKNTRLCRANRDARVGGHLRLSGQMGPHAHRRQRLRRESALRSPCSSTEPLCSPSESDSDLEPVGAGIQHLQKLSQRLDRAIKAEESGDMTVSLIRE.

Residues 1–44 (MASQWQGMRTSVRRRSLLKEEQLEKKEVTRSAGGHPETGPLGSL) are disordered. A phosphoserine mark is found at Ser-11 and Ser-16. Short sequence motifs (D-box) lie at residues 14–17 (RRSL) and 53–56 (PLRA). The span at 17-29 (LLKEEQLEKKEVT) shows a compositional bias: basic and acidic residues. Ser-72 is modified (phosphoserine). Disordered stretches follow at residues 115-138 (KVRR…QKNT) and 152-197 (HLRL…DLEP). At Ser-128 the chain carries Phosphoserine; by Uhmk1; in vitro. Positions 178-190 (PCSSTEPLCSPSE) are enriched in polar residues. Ser-191 and Ser-193 each carry phosphoserine.

Interacts with PICALM; this interaction may target PICALM to the nucleus. During mitosis, associates with HDAC2 and MTA2 subunits of the chromatin-remodeling NuRD complex; this association is strongest at prometaphase and decreases as the cell progresses through metaphase and anaphase. Ubiquitinated by the anaphase-promoting complex/cyclosome (APC/C) complex in the presence of FZR1, leading to its degradation by the proteasome during mitotic exit. However, degradation is not essential for normal mitotic progression within a single cell cycle. In terms of tissue distribution, mainly expressed in thymus and ovary. Expressed in all T-cell subpopulations isolated from the thymus, macrophages, pro-erythrocytes, granulocytes, mast cells and progenitor cells.

The protein resides in the nucleus. It localises to the nucleolus. Its function is as follows. During mitosis, may play a role in the metaphase-to-anaphase transition. This is Protein PIMREG from Mus musculus (Mouse).